Here is a 977-residue protein sequence, read N- to C-terminus: MGAEEEVLVTLSGGAPWGFRLHGGAEQRKPLQVSKIRRRSQAGRAGLRERDQLLAINGVSCTNLSHASAMSLIDASGNQLVLTVQRLADEGPVQSPSPHELQVLSPLSPLSPEPPGAPVPQPLQPGSLRSPPDSEAYYGETDSDADGPATQEKPRRPRRRGPTRPTPPGAPPDEVYLSDSPAEPAPTIPGPPSQGDSRVSSPSWEDGAALQPPPAEALLLPHGPLRPGPHLIPMVGPVPHPVAEDLTTTYTQKAKQAKLQRAESLQEKSIKEAKTKCRTIASLLTAAPNPHSKGVLMFKKRRQRAKKYTLVSFGAAAGTGAEEEDGVPPTSESELDEEAFSDARSLTNQSDWDSPYLDMELARAGSRASEGQGSGLGGQLSEVSGRGVQLFEQQRQRADSSTQELARVEPAAMLNGEGLQSPPRAQSAPPEAAVLPPSPLPAPVASPRPFQPGGGAPTPAPSIFNRSARPFTPGLQGQRPTTTSVIFRPLAPKRANDSLGGLSPAPPPFLSSQGPTPLPSFTSGVPSHAPVSGSPSTPRSSGPVTATSSLYIPAPSRPVTPGGAPEPPAPPSAAAMTSTASIFLSAPLRPSARPEAPAPGPGAPEPPSAREQRISVPAARTGILQEARRRGTRKQMFRPGKEETKNSPNPELLSLVQNLDEKPRAGGAESGPEEDALSLGAEACNFMQPVGARSYKTLPHVTPKTPPPMAPKTPPPMTPKTPPPVAPKPPSRGLLDGLVNGAASSAGIPEPPRLQGRGGELFAKRQSRADRYVVEGTPGPGLGPRPRSPSPTPSLPPSWKYSPNIRAPPPIAYNPLLSPFFPQAARTLPKAQSQGPRATPKQGIKALDFMRHQPYQLKTAMFCFDEVPPTPGPIASGSPKTARVQEIRRFSTPAPQPTAEPLAPTVLAPRAATTLDEPIWRTELASAPVPSPAPPPEAPRGLGASPSSCGFQVARPRFSATRTGLQAHVWRPGAGHQ.

Residues 6–88 (EVLVTLSGGA…QLVLTVQRLA (83 aa)) form the PDZ domain. 3 disordered regions span residues 91–226 (GPVQ…GPLR), 317–352 (AGTGAEEEDGVPPTSESELDEEAFSDARSLTNQSDW), and 364–677 (AGSR…EDAL). A phosphoserine mark is found at serine 108 and serine 111. Residues 109-123 (PLSPEPPGAPVPQPL) show a composition bias toward pro residues. At threonine 141 the chain carries Phosphothreonine. Residues serine 143, serine 178, and serine 180 each carry the phosphoserine modification. Residues 183–192 (EPAPTIPGPP) are compositionally biased toward pro residues. Positions 194 to 203 (QGDSRVSSPS) are enriched in polar residues. Residues 216–226 (EALLLPHGPLR) show a composition bias toward low complexity. 5 positions are modified to phosphoserine: serine 345, serine 350, serine 374, serine 381, and serine 384. Arginine 386 bears the Omega-N-methylarginine mark. The segment covering 436–450 (PPSPLPAPVASPRPF) has biased composition (pro residues). 3 positions are modified to omega-N-methylarginine: arginine 466, arginine 469, and arginine 479. A compositionally biased stretch (polar residues) spans 510–525 (LSSQGPTPLPSFTSGV). 2 stretches are compositionally biased toward low complexity: residues 530 to 545 (PVSGSPSTPRSSGPVT) and 572 to 595 (SAAAMTSTASIFLSAPLRPSARPE). A compositionally biased stretch (pro residues) spans 596 to 607 (APAPGPGAPEPP). Residues serine 670 and serine 678 each carry the phosphoserine modification. The disordered stretch occupies residues 697 to 802 (TLPHVTPKTP…PSLPPSWKYS (106 aa)). A compositionally biased stretch (pro residues) spans 704–730 (KTPPPMAPKTPPPMTPKTPPPVAPKPP). Threonine 705 and threonine 713 each carry phosphothreonine. At arginine 757 the chain carries Omega-N-methylarginine. Over residues 781–796 (GLGPRPRSPSPTPSLP) the composition is skewed to pro residues. Residues serine 788 and serine 790 each carry the phosphoserine modification. Threonine 792 is subject to Phosphothreonine. Residues arginine 806, arginine 826, and arginine 889 each carry the omega-N-methylarginine modification. Serine 891 bears the Phosphoserine mark. Residues threonine 892 and threonine 898 each carry the phosphothreonine modification. The residue at position 910 (arginine 910) is an Omega-N-methylarginine. At arginine 921 the chain carries Asymmetric dimethylarginine; alternate. Residue arginine 921 is modified to Omega-N-methylarginine; alternate. The interval 922 to 950 (TELASAPVPSPAPPPEAPRGLGASPSSCG) is disordered. Residues 929 to 938 (VPSPAPPPEA) are compositionally biased toward pro residues. 2 positions are modified to omega-N-methylarginine: arginine 955 and arginine 957.

Belongs to the synaptopodin family.

It localises to the cytoplasm. The protein resides in the cytoskeleton. Actin-associated protein that may play a role in modulating actin-based shape. The protein is Synaptopodin 2-like protein (SYNPO2L) of Homo sapiens (Human).